The chain runs to 500 residues: Polyamine oxidase 1 (500 aa).

Residues 1–28 (MSSSPSFGLLAVAALLLALSLAQHGSLA) form the signal peptide. FAD contacts are provided by residues 42-43 (MS), E63, R71, and 87-88 (NW). Residue E90 coordinates substrate. N105 carries an N-linked (GlcNAc...) asparagine glycan. Residue E198 coordinates substrate. FAD-binding residues include V265, Y427, and E458. G466 contacts substrate. 467–468 (YV) contributes to the FAD binding site. A disulfide bridge connects residues C485 and C491.

This sequence belongs to the flavin monoamine oxidase family. Monomer. The cofactor is FAD.

It localises to the secreted. It is found in the extracellular space. Its subcellular location is the apoplast. The protein localises to the cell wall. The catalysed reaction is spermidine + O2 + H2O = 4-aminobutanal + propane-1,3-diamine + H2O2. It catalyses the reaction N(8)-acetylspermidine + O2 + H2O = 4-acetamidobutanal + propane-1,3-diamine + H2O2. It carries out the reaction spermine + O2 + H2O = N-(3-aminopropyl)-4-aminobutanal + propane-1,3-diamine + H2O2. The enzyme catalyses N(1)-acetylspermine + O2 + H2O = N-(3-acetamidopropyl)-4-aminobutanal + propane-1,3-diamine + H2O2. It participates in amine and polyamine degradation; spermine degradation. Functionally, flavoenzyme involved in polyamine back-conversion. Catalyzes the oxidation of the secondary amino group of polyamines, such as spermine, spermidine and their acetyl derivatives. Plays an important role in the regulation of polyamine intracellular concentration. The protein is Polyamine oxidase 1 of Zea mays (Maize).